Consider the following 310-residue polypeptide: tRNA dimethylallyltransferase (310 aa).

10 to 17 (GPTAVGKS) lines the ATP pocket. 12–17 (TAVGKS) contributes to the substrate binding site. An interaction with substrate tRNA region spans residues 35–38 (DSMQ).

Belongs to the IPP transferase family. Monomer. The cofactor is Mg(2+).

The catalysed reaction is adenosine(37) in tRNA + dimethylallyl diphosphate = N(6)-dimethylallyladenosine(37) in tRNA + diphosphate. Its function is as follows. Catalyzes the transfer of a dimethylallyl group onto the adenine at position 37 in tRNAs that read codons beginning with uridine, leading to the formation of N6-(dimethylallyl)adenosine (i(6)A). The polypeptide is tRNA dimethylallyltransferase (Clostridium perfringens (strain 13 / Type A)).